Reading from the N-terminus, the 322-residue chain is 2-methylene-furan-3-one reductase (322 aa).

NADP(+) contacts are provided by residues K59, 174-175, 197-200, Y215, I253, 264-266, 311-312, and 311-322; these read GV, STKK, FVL, RA, and RATGKVVVYPIP. A substrate-binding site is contributed by K59.

The protein belongs to the zinc-containing alcohol dehydrogenase family. Quinone oxidoreductase subfamily. As to quaternary structure, monomer. The N-terminus is blocked.

The enzyme catalyses 4-hydroxy-2,5-dimethyl-furan-3(2H)-one + NADP(+) = 4-hydroxy-5-methyl-2-methylenefuran-3(2H)-one + NADPH + H(+). Functionally, enone oxidoreductase involved in the biosynthesis of 4-hydroxy-2,5-dimethyl-3(2H)-furanone (HDMF or furaneol), the key flavor compound in strawberries. Can use both NADH and NADPH as the electron donor. This chain is 2-methylene-furan-3-one reductase (EO), found in Fragaria ananassa (Strawberry).